Reading from the N-terminus, the 523-residue chain is Transmembrane protein 266 (523 aa).

Over 1–94 (MTNPQPAIEG…VFLLSASLNS (94 aa)) the chain is Cytoplasmic. A helical transmembrane segment spans residues 95-115 (FLVACVILVVILLTLELLIDI). Topologically, residues 116 to 121 (KLLQFS) are extracellular. A helical transmembrane segment spans residues 122-142 (SAFQFAGVIHWISLVILSVFF). The Cytoplasmic portion of the chain corresponds to 143-161 (SETVLRIVVLGIWDYIENK). The chain crosses the membrane as a helical span at residues 162–182 (IEVFDGAVIILSLAPMVASTV). The Extracellular segment spans residues 183–191 (ANGPRSPWD). A helical membrane pass occupies residues 192–212 (AISLIIMLRIWRVKRVIDAYV). The Cytoplasmic segment spans residues 213-523 (LPVKLEMEMV…EQKLHRVPEA (311 aa)). Residues 218 to 270 (EMEMVIQQYEKAKVIQDEQLERLTQICQEQGFEIRQLRAHLAQQDLDLAAERE) adopt a coiled-coil conformation. The disordered stretch occupies residues 380–477 (SASRSSVTRA…PELEHRVSLF (98 aa)). Residues 382 to 397 (SRSSVTRAQSDSSQTL) are compositionally biased toward low complexity. A compositionally biased stretch (polar residues) spans 398 to 411 (GSSMDCSTAREEPS). Positions 421 to 430 (LPSQQQVEEA) are enriched in pro residues.

Homodimer; disulfide-linked. Mainly expressed in the cerebellum. Also expressed in cerebral cortex, skeletal muscle and thyroid, but at much lower levels.

The protein resides in the cell membrane. Its subcellular location is the cell projection. The protein localises to the dendrite. It localises to the perikaryon. Its function is as follows. Voltage-sensor protein present on the post-synaptic side of glutamatergic mossy fibers and granule cells in the cerebellum. Despite the presence of a voltage-sensor segment, does not form a functional ion channel and its precise role remains unclear. Undergoes both rapid and slow structural rearrangements in response to changes in voltage. Contains a zinc-binding site that can regulate the slow conformational transition. The sequence is that of Transmembrane protein 266 from Homo sapiens (Human).